The chain runs to 365 residues: Heat-inducible transcription repressor HrcA (365 aa).

The protein belongs to the HrcA family.

Its function is as follows. Negative regulator of class I heat shock genes (grpE-dnaK-dnaJ and groELS operons). Prevents heat-shock induction of these operons. This is Heat-inducible transcription repressor HrcA from Nodularia spumigena.